Here is a 138-residue protein sequence, read N- to C-terminus: 1,4-dihydroxy-2-naphthoyl-CoA hydrolase (138 aa).

The active site involves aspartate 14.

This sequence belongs to the 4-hydroxybenzoyl-CoA thioesterase family. DHNA-CoA hydrolase subfamily.

The catalysed reaction is 1,4-dihydroxy-2-naphthoyl-CoA + H2O = 1,4-dihydroxy-2-naphthoate + CoA + H(+). The protein operates within cofactor biosynthesis; phylloquinone biosynthesis. Its pathway is quinol/quinone metabolism; 1,4-dihydroxy-2-naphthoate biosynthesis; 1,4-dihydroxy-2-naphthoate from chorismate: step 7/7. Catalyzes the hydrolysis of 1,4-dihydroxy-2-naphthoyl-CoA (DHNA-CoA) to 1,4-dihydroxy-2-naphthoate (DHNA), a reaction involved in phylloquinone (vitamin K1) biosynthesis. This is 1,4-dihydroxy-2-naphthoyl-CoA hydrolase from Rippkaea orientalis (strain PCC 8801 / RF-1) (Cyanothece sp. (strain PCC 8801)).